Consider the following 820-residue polypeptide: G-type lectin S-receptor-like serine/threonine-protein kinase At1g11300 (820 aa).

A signal peptide spans Met1 to Ala26. A Bulb-type lectin domain is found at Gln27–Phe150. Over Gln27–Pro436 the chain is Extracellular. N-linked (GlcNAc...) asparagine glycosylation is found at Asn37, Asn58, Asn87, Asn115, Asn123, Asn173, Asn211, Asn247, Asn256, and Asn282. In terms of domain architecture, EGF-like; atypical spans Pro290–Ile326. Disulfide bonds link Cys294/Cys306 and Cys300/Cys314. Asn332 and Asn351 each carry an N-linked (GlcNAc...) asparagine glycan. One can recognise a PAN domain in the interval Cys345–Ala425. Intrachain disulfides connect Cys379–Cys400 and Cys383–Cys389. Asn404 is a glycosylation site (N-linked (GlcNAc...) asparagine). Residues Ile437 to Ala457 form a helical membrane-spanning segment. Residues Arg458–Arg820 lie on the Cytoplasmic side of the membrane. Residues Phe509–Phe788 enclose the Protein kinase domain. ATP-binding positions include Leu515 to Val523 and Lys537. Positions Arg598–Ile615 are caM-binding. Asp634 functions as the Proton acceptor in the catalytic mechanism.

The protein belongs to the protein kinase superfamily. Ser/Thr protein kinase family.

The protein localises to the cell membrane. It carries out the reaction L-seryl-[protein] + ATP = O-phospho-L-seryl-[protein] + ADP + H(+). It catalyses the reaction L-threonyl-[protein] + ATP = O-phospho-L-threonyl-[protein] + ADP + H(+). The polypeptide is G-type lectin S-receptor-like serine/threonine-protein kinase At1g11300 (Arabidopsis thaliana (Mouse-ear cress)).